Reading from the N-terminus, the 113-residue chain is Retrotransposon Gag-like protein 8C (113 aa).

It belongs to the FAM127 family.

In Homo sapiens (Human), this protein is Retrotransposon Gag-like protein 8C.